A 152-amino-acid chain; its full sequence is Superoxide dismutase [Cu-Zn] (152 aa).

Residues His-45, His-47, and His-62 each contribute to the Cu cation site. The interval 61 to 87 (PHFNPAGKEHGAPEDENRHAGDLGNAT) is disordered. 4 residues coordinate Zn(2+): His-62, His-70, His-79, and Asp-82. Residues 67 to 81 (GKEHGAPEDENRHAG) are compositionally biased toward basic and acidic residues. His-119 is a Cu cation binding site.

Belongs to the Cu-Zn superoxide dismutase family. In terms of assembly, homodimer. Cu cation is required as a cofactor. It depends on Zn(2+) as a cofactor.

It is found in the cytoplasm. The enzyme catalyses 2 superoxide + 2 H(+) = H2O2 + O2. Its function is as follows. Destroys radicals which are normally produced within the cells and which are toxic to biological systems. This chain is Superoxide dismutase [Cu-Zn], found in Zingiber officinale (Ginger).